The following is a 403-amino-acid chain: Bifunctional enzyme IspD/IspF (403 aa).

The interval 1-234 (MPTSKRTAAI…ARLAAMLGDI (234 aa)) is 2-C-methyl-D-erythritol 4-phosphate cytidylyltransferase. Residues 235 to 403 (RTGTGYDVHA…SDQEDKGWST (169 aa)) are 2-C-methyl-D-erythritol 2,4-cyclodiphosphate synthase. Aspartate 241 and histidine 243 together coordinate a divalent metal cation. 4-CDP-2-C-methyl-D-erythritol 2-phosphate contacts are provided by residues 241–243 (DVH) and 267–268 (HS). Histidine 275 is an a divalent metal cation binding site. Residues 289–291 (DIG), 365–368 (TTSE), phenylalanine 372, and arginine 375 contribute to the 4-CDP-2-C-methyl-D-erythritol 2-phosphate site.

It in the N-terminal section; belongs to the IspD/TarI cytidylyltransferase family. IspD subfamily. In the C-terminal section; belongs to the IspF family. The cofactor is a divalent metal cation.

It carries out the reaction 2-C-methyl-D-erythritol 4-phosphate + CTP + H(+) = 4-CDP-2-C-methyl-D-erythritol + diphosphate. The catalysed reaction is 4-CDP-2-C-methyl-D-erythritol 2-phosphate = 2-C-methyl-D-erythritol 2,4-cyclic diphosphate + CMP. The protein operates within isoprenoid biosynthesis; isopentenyl diphosphate biosynthesis via DXP pathway; isopentenyl diphosphate from 1-deoxy-D-xylulose 5-phosphate: step 2/6. It functions in the pathway isoprenoid biosynthesis; isopentenyl diphosphate biosynthesis via DXP pathway; isopentenyl diphosphate from 1-deoxy-D-xylulose 5-phosphate: step 4/6. In terms of biological role, bifunctional enzyme that catalyzes the formation of 4-diphosphocytidyl-2-C-methyl-D-erythritol from CTP and 2-C-methyl-D-erythritol 4-phosphate (MEP) (IspD), and catalyzes the conversion of 4-diphosphocytidyl-2-C-methyl-D-erythritol 2-phosphate (CDP-ME2P) to 2-C-methyl-D-erythritol 2,4-cyclodiphosphate (ME-CPP) with a corresponding release of cytidine 5-monophosphate (CMP) (IspF). The polypeptide is Bifunctional enzyme IspD/IspF (Nitrobacter hamburgensis (strain DSM 10229 / NCIMB 13809 / X14)).